A 332-amino-acid chain; its full sequence is Ribosomal RNA small subunit methyltransferase H (332 aa).

S-adenosyl-L-methionine is bound by residues 37 to 39 (GGY), Asp55, Phe82, Asp103, and Gln110. Residues 281–332 (TKRPVTPSDEETAANPRARSAKLRAGERTAAPAQPEAPLPHWPTLASVMGRR) are disordered.

It belongs to the methyltransferase superfamily. RsmH family.

The protein localises to the cytoplasm. The enzyme catalyses cytidine(1402) in 16S rRNA + S-adenosyl-L-methionine = N(4)-methylcytidine(1402) in 16S rRNA + S-adenosyl-L-homocysteine + H(+). Functionally, specifically methylates the N4 position of cytidine in position 1402 (C1402) of 16S rRNA. The protein is Ribosomal RNA small subunit methyltransferase H of Rhodopseudomonas palustris (strain BisA53).